The primary structure comprises 102 residues: Small ribosomal subunit protein uS10 (102 aa).

This sequence belongs to the universal ribosomal protein uS10 family. As to quaternary structure, part of the 30S ribosomal subunit.

In terms of biological role, involved in the binding of tRNA to the ribosomes. The sequence is that of Small ribosomal subunit protein uS10 from Leifsonia xyli subsp. xyli (strain CTCB07).